The sequence spans 339 residues: Holliday junction branch migration complex subunit RuvB (339 aa).

Residues 2-187 are large ATPase domain (RuvB-L); sequence KDVNEEERII…FGIIEHMQYY (186 aa). ATP contacts are provided by residues Leu-26, Arg-27, Gly-68, Lys-71, Thr-72, Thr-73, 134–136, Arg-177, Tyr-187, and Arg-224; that span reads EDF. Position 72 (Thr-72) interacts with Mg(2+). The segment at 188–258 is small ATPAse domain (RuvB-S); that stretch reads SVEDLEKIIQ…TTKHSLHLLE (71 aa). The tract at residues 261-339 is head domain (RuvB-H); the sequence is DEGLDQTDRK…QLGYPPKDEK (79 aa). DNA is bound by residues Arg-316 and Arg-321.

The protein belongs to the RuvB family. In terms of assembly, homohexamer. Forms an RuvA(8)-RuvB(12)-Holliday junction (HJ) complex. HJ DNA is sandwiched between 2 RuvA tetramers; dsDNA enters through RuvA and exits via RuvB. An RuvB hexamer assembles on each DNA strand where it exits the tetramer. Each RuvB hexamer is contacted by two RuvA subunits (via domain III) on 2 adjacent RuvB subunits; this complex drives branch migration. In the full resolvosome a probable DNA-RuvA(4)-RuvB(12)-RuvC(2) complex forms which resolves the HJ.

It localises to the cytoplasm. It catalyses the reaction ATP + H2O = ADP + phosphate + H(+). In terms of biological role, the RuvA-RuvB-RuvC complex processes Holliday junction (HJ) DNA during genetic recombination and DNA repair, while the RuvA-RuvB complex plays an important role in the rescue of blocked DNA replication forks via replication fork reversal (RFR). RuvA specifically binds to HJ cruciform DNA, conferring on it an open structure. The RuvB hexamer acts as an ATP-dependent pump, pulling dsDNA into and through the RuvAB complex. RuvB forms 2 homohexamers on either side of HJ DNA bound by 1 or 2 RuvA tetramers; 4 subunits per hexamer contact DNA at a time. Coordinated motions by a converter formed by DNA-disengaged RuvB subunits stimulates ATP hydrolysis and nucleotide exchange. Immobilization of the converter enables RuvB to convert the ATP-contained energy into a lever motion, pulling 2 nucleotides of DNA out of the RuvA tetramer per ATP hydrolyzed, thus driving DNA branch migration. The RuvB motors rotate together with the DNA substrate, which together with the progressing nucleotide cycle form the mechanistic basis for DNA recombination by continuous HJ branch migration. Branch migration allows RuvC to scan DNA until it finds its consensus sequence, where it cleaves and resolves cruciform DNA. The chain is Holliday junction branch migration complex subunit RuvB from Lactobacillus johnsonii (strain CNCM I-12250 / La1 / NCC 533).